A 606-amino-acid polypeptide reads, in one-letter code: Melanoma-associated antigen D2 (606 aa).

The disordered stretch occupies residues 1–204; the sequence is MSDTSESGAG…QASGTTGGRR (204 aa). Residue serine 2 is modified to N-acetylserine. Serine 5 carries the phosphoserine modification. Residues 24 to 37 are compositionally biased toward polar residues; that stretch reads SSMMQTLLTVTQNV. Threonine 72 carries the phosphothreonine modification. Positions 81–93 are enriched in polar residues; sequence TQASSTTQLTDTQ. The span at 122-131 shows a compositional bias: basic and acidic residues; the sequence is ETKKVSHVAD. Positions 142–164 are enriched in low complexity; it reads EAAPSQAPADEPEPESAAAQSQE. Serine 157 carries the post-translational modification Phosphoserine. Over residues 171–181 the composition is skewed to basic residues; sequence KVKAKKARKVK. Residues serine 190, serine 191, serine 194, serine 197, serine 244, and serine 247 each carry the phosphoserine modification. Over residues 248–260 the composition is skewed to basic residues; it reads PKARRGKARRRAA. Positions 248–275 are disordered; that stretch reads PKARRGKARRRAAKLQSSQEPEAPPPRD. A phosphoserine mark is found at serine 264 and serine 265. The MAGE domain maps to 279 to 478; it reads LQGRANDLVK…KEWAAQYREA (200 aa). The disordered stretch occupies residues 534-563; sequence GAEAKAKAQESGSASTGASTSTNNSASASA.

As to quaternary structure, interacts with GNAS. May interact with DNAJB1. In terms of tissue distribution, widely expressed. In the developing and adult kidney, expressed in the thick ascending limb of the loop of Henle and the distal convoluted tubules outside the loop.

Functionally, regulates the expression, localization to the plasma membrane and function of the sodium chloride cotransporters SLC12A1 and SLC12A3, two key components of salt reabsorption in the distal renal tubule. The chain is Melanoma-associated antigen D2 (MAGED2) from Homo sapiens (Human).